An 84-amino-acid chain; its full sequence is Sec-independent protein translocase protein TatA (84 aa).

Residues 1–21 (MGGLQPWHWLIVIAVFVLLFG) traverse the membrane as a helical segment. Residues 46–84 (MQSDSNAAKSDQPEQITSERVVVDPSTQSTSSNSDKRPA) form a disordered region. Residues 48 to 63 (SDSNAAKSDQPEQITS) show a composition bias toward polar residues.

Belongs to the TatA/E family. In terms of assembly, the Tat system comprises two distinct complexes: a TatABC complex, containing multiple copies of TatA, TatB and TatC subunits, and a separate TatA complex, containing only TatA subunits. Substrates initially bind to the TatABC complex, which probably triggers association of the separate TatA complex to form the active translocon.

It is found in the cell membrane. Functionally, part of the twin-arginine translocation (Tat) system that transports large folded proteins containing a characteristic twin-arginine motif in their signal peptide across membranes. TatA could form the protein-conducting channel of the Tat system. This chain is Sec-independent protein translocase protein TatA, found in Mycolicibacterium gilvum (strain PYR-GCK) (Mycobacterium gilvum (strain PYR-GCK)).